Consider the following 257-residue polypeptide: Metallo-beta-lactamase type 2 (257 aa).

The first 30 residues, Met-1–Ala-30, serve as a signal peptide directing secretion. The Zn(2+) site is built by His-116, His-118, Asp-120, His-179, and Cys-198. Substrate is bound by residues Lys-201 and Asn-210. His-240 contributes to the Zn(2+) binding site.

This sequence belongs to the metallo-beta-lactamase superfamily. Class-B beta-lactamase family. In terms of assembly, monomer. It depends on Zn(2+) as a cofactor.

It localises to the periplasm. The enzyme catalyses a beta-lactam + H2O = a substituted beta-amino acid. Its function is as follows. Confers resistance to the different beta-lactams antibiotics (penicillin, cephalosporin and carbapenem) via the hydrolysis of the beta-lactam ring. This chain is Metallo-beta-lactamase type 2, found in Bacillus sp. (strain 170).